The following is a 456-amino-acid chain: UDP-N-acetylglucosamine 1-carboxyvinyltransferase (456 aa).

34–35 (KN) provides a ligand contact to phosphoenolpyruvate. Arg-104 is a binding site for UDP-N-acetyl-alpha-D-glucosamine. Cys-128 functions as the Proton donor in the catalytic mechanism. The residue at position 128 (Cys-128) is a 2-(S-cysteinyl)pyruvic acid O-phosphothioketal. UDP-N-acetyl-alpha-D-glucosamine contacts are provided by Asp-319 and Ile-341.

The protein belongs to the EPSP synthase family. MurA subfamily.

Its subcellular location is the cytoplasm. It carries out the reaction phosphoenolpyruvate + UDP-N-acetyl-alpha-D-glucosamine = UDP-N-acetyl-3-O-(1-carboxyvinyl)-alpha-D-glucosamine + phosphate. Its pathway is cell wall biogenesis; peptidoglycan biosynthesis. Functionally, cell wall formation. Adds enolpyruvyl to UDP-N-acetylglucosamine. This is UDP-N-acetylglucosamine 1-carboxyvinyltransferase from Prochlorococcus marinus (strain MIT 9312).